Reading from the N-terminus, the 456-residue chain is MASKIGTAGNRSGTTGMPSFISQIPVSNPMGTEANNTNTSRMSDFGVLEQYLGFRIGDGANVNRSPLFNSTSATNPAVGFEVSGTINRTLAPSNTSLPTATPRSQTMLLQSNLVSASGTHHENWGESNMADSGSRTDTSTDMDGDDKNQLIEAGQSSDKSKEKVLDQKTLRRLAQNREAARKSRLRKKAYVQQLENSRLKLSQLEQDLQRARQQGKYISNIADQSNGVGANGPLAFDAEYSRWLEEHNKHINELRTAVNAHASDPELRSIVNNVTAHFDEVFRVKGNAAKADVFHVLSGMWKTPAERCFMWIGGFRPSELLKLLVNQLEPLTEQQLAGIYNLQQSSHQAEDALSQGMEALQQSLAETLANGSPAPEGSSGDVANYMGQMAMAMGKLGTLEGFLRQADNLRQQTLQQMHRVLTTRQSARALLAINEYFSRLRALSSLWLARPREQLV.

2 disordered regions span residues 1-41 (MASK…NTSR) and 115-170 (SASG…QKTL). 2 stretches are compositionally biased toward polar residues: residues 9–41 (GNRS…NTSR) and 125–141 (GESN…TSTD). Over residues 158–169 (DKSKEKVLDQKT) the composition is skewed to basic and acidic residues. The 64-residue stretch at 166–229 (DQKTLRRLAQ…NIADQSNGVG (64 aa)) folds into the bZIP domain. Residues 167 to 220 (QKTLRRLAQNREAARKSRLRKKAYVQQLENSRLKLSQLEQDLQRARQQGKYISN) are a coiled coil. A basic motif region spans residues 168–188 (KTLRRLAQNREAARKSRLRKK). Positions 194–208 (LENSRLKLSQLEQDL) are leucine-zipper. Residues 233–450 (PLAFDAEYSR…RALSSLWLAR (218 aa)) enclose the DOG1 domain.

The protein belongs to the bZIP family. Can form heterodimer with TGA2.2.

It localises to the nucleus. In terms of biological role, transcriptional activator that binds specifically to the DNA sequence 5'-TGACG-3'. Recognizes ocs elements like the as-1 motif of the cauliflower mosaic virus 35S promoter. Binding to the as-1-like cis elements mediate auxin- and salicylic acid-inducible transcription. This chain is TGACG-sequence-specific DNA-binding protein TGA-2.1 (TGA21), found in Nicotiana tabacum (Common tobacco).